Consider the following 159-residue polypeptide: Phosphopantetheine adenylyltransferase (159 aa).

Ser-9 contacts substrate. Residues 9–10 (SF) and His-17 each bind ATP. 3 residues coordinate substrate: Lys-41, Leu-73, and Lys-87. ATP-binding positions include 88-90 (GLR), Glu-98, and 122-128 (YSFLSSS).

The protein belongs to the bacterial CoaD family. Homohexamer. Requires Mg(2+) as cofactor.

It is found in the cytoplasm. The enzyme catalyses (R)-4'-phosphopantetheine + ATP + H(+) = 3'-dephospho-CoA + diphosphate. Its pathway is cofactor biosynthesis; coenzyme A biosynthesis; CoA from (R)-pantothenate: step 4/5. Its function is as follows. Reversibly transfers an adenylyl group from ATP to 4'-phosphopantetheine, yielding dephospho-CoA (dPCoA) and pyrophosphate. This chain is Phosphopantetheine adenylyltransferase, found in Streptomyces avermitilis (strain ATCC 31267 / DSM 46492 / JCM 5070 / NBRC 14893 / NCIMB 12804 / NRRL 8165 / MA-4680).